We begin with the raw amino-acid sequence, 184 residues long: Large ribosomal subunit protein uL15 (184 aa).

The disordered stretch occupies residues 1–55 (MDLSSLSPAKGSVKNKKRVGRGQGSGNGTTAGKGNKGQQSRSGYKRPVSEGGQMP). Over residues 21-35 (RGQGSGNGTTAGKGN) the composition is skewed to gly residues.

The protein belongs to the universal ribosomal protein uL15 family. Part of the 50S ribosomal subunit.

Binds to the 23S rRNA. This is Large ribosomal subunit protein uL15 from Prosthecochloris aestuarii (strain DSM 271 / SK 413).